The sequence spans 257 residues: Na(+)-translocating NADH-quinone reductase subunit C (257 aa).

Residues 13–33 (LTVVVLLSLICSLIVASAAVL) form a helical membrane-spanning segment. Residue threonine 224 is modified to FMN phosphoryl threonine.

Belongs to the NqrC family. As to quaternary structure, composed of six subunits; NqrA, NqrB, NqrC, NqrD, NqrE and NqrF. FMN serves as cofactor.

The protein localises to the cell inner membrane. It catalyses the reaction a ubiquinone + n Na(+)(in) + NADH + H(+) = a ubiquinol + n Na(+)(out) + NAD(+). NQR complex catalyzes the reduction of ubiquinone-1 to ubiquinol by two successive reactions, coupled with the transport of Na(+) ions from the cytoplasm to the periplasm. NqrA to NqrE are probably involved in the second step, the conversion of ubisemiquinone to ubiquinol. This is Na(+)-translocating NADH-quinone reductase subunit C from Haemophilus ducreyi (strain 35000HP / ATCC 700724).